The chain runs to 257 residues: Ribonuclease HII (257 aa).

In terms of domain architecture, RNase H type-2 spans 72–257 (TYIAGIDEVG…FAPIKDMIQK (186 aa)). The a divalent metal cation site is built by Asp78, Glu79, and Asp170.

This sequence belongs to the RNase HII family. Requires Mn(2+) as cofactor. Mg(2+) is required as a cofactor.

The protein resides in the cytoplasm. It catalyses the reaction Endonucleolytic cleavage to 5'-phosphomonoester.. Endonuclease that specifically degrades the RNA of RNA-DNA hybrids. In Bacillus cereus (strain ATCC 14579 / DSM 31 / CCUG 7414 / JCM 2152 / NBRC 15305 / NCIMB 9373 / NCTC 2599 / NRRL B-3711), this protein is Ribonuclease HII.